Here is a 108-residue protein sequence, read N- to C-terminus: uncharacterized protein (108 aa).

Composition is skewed to basic and acidic residues over residues 1–15 (MSEA…EVLV) and 53–69 (KLKD…RNSE). Residues 1-77 (MSEAKDNGSR…SELDQDEEDK (77 aa)) form a disordered region.

This is an uncharacterized protein from Homo sapiens (Human).